The chain runs to 1300 residues: DNA-directed RNA polymerase subunit beta (1300 aa).

Belongs to the RNA polymerase beta chain family. The RNAP catalytic core consists of 2 alpha, 1 beta, 1 beta' and 1 omega subunit. When a sigma factor is associated with the core the holoenzyme is formed, which can initiate transcription.

It carries out the reaction RNA(n) + a ribonucleoside 5'-triphosphate = RNA(n+1) + diphosphate. In terms of biological role, DNA-dependent RNA polymerase catalyzes the transcription of DNA into RNA using the four ribonucleoside triphosphates as substrates. The polypeptide is DNA-directed RNA polymerase subunit beta (Chlorobium chlorochromatii (strain CaD3)).